A 661-amino-acid chain; its full sequence is Transketolase (661 aa).

Residue His28 participates in substrate binding. Residues His68 and 116-118 each bind thiamine diphosphate; that span reads GPL. Glu157 provides a ligand contact to Mg(2+). Residues Gly158 and Asn187 each contribute to the thiamine diphosphate site. Residues Asn187 and Ile189 each contribute to the Mg(2+) site. Positions 261 and 358 each coordinate substrate. Thiamine diphosphate is bound at residue His261. The active-site Proton donor is the Glu412. Phe438 contacts thiamine diphosphate. The substrate site is built by His462, Asp470, and Arg521.

It belongs to the transketolase family. In terms of assembly, homodimer. Requires Mg(2+) as cofactor. Ca(2+) is required as a cofactor. Mn(2+) serves as cofactor. It depends on Co(2+) as a cofactor. The cofactor is thiamine diphosphate.

The enzyme catalyses D-sedoheptulose 7-phosphate + D-glyceraldehyde 3-phosphate = aldehydo-D-ribose 5-phosphate + D-xylulose 5-phosphate. Catalyzes the transfer of a two-carbon ketol group from a ketose donor to an aldose acceptor, via a covalent intermediate with the cofactor thiamine pyrophosphate. The sequence is that of Transketolase (tkt) from Treponema pallidum (strain Nichols).